Consider the following 2355-residue polypeptide: Acetyl-CoA carboxylase 2 (2355 aa).

Residues 138-645 (PIHSILVATN…HTGWLDSRIA (508 aa)) form the Biotin carboxylation domain. Residues 291–485 (GRSLVTVPEE…AAQVAVGMGI (195 aa)) form the ATP-grasp domain. 317–374 (CQVVGYPAMIKASWGGGGKGIRKVHNDDEVRALFKQVQGEVPGSPIFIMKVASQSRHL) is an ATP binding site. The Mg(2+) site is built by Glu-440, Glu-454, and Asn-456. Residues Glu-440, Glu-454, and Asn-456 each coordinate Mn(2+). Arg-458 is a catalytic residue. The Biotinyl-binding domain occupies 772 to 846 (LQNDHDPSKL…QAGELIAKLD (75 aa)). Lys-813 is subject to N6-biotinyllysine. The residue at position 1133 (Thr-1133) is a Phosphothreonine. The residue at position 1293 (Ser-1293) is a Phosphoserine. The region spanning 1593-1932 (QYKPLNNLDR…YVGGPLPVLA (340 aa)) is the CoA carboxyltransferase N-terminal domain. The segment at 1593-2251 (QYKPLNNLDR…ESSLVRNIRK (659 aa)) is carboxyltransferase. CoA-binding residues include Arg-1841, Lys-2142, and Arg-2144. The 316-residue stretch at 1936-2251 (PPERTVEYIP…ESSLVRNIRK (316 aa)) folds into the CoA carboxyltransferase C-terminal domain.

As to quaternary structure, homodimer. Biotin serves as cofactor. Requires Mg(2+) as cofactor. The cofactor is Mn(2+). In terms of tissue distribution, widely expressed at low levels.

The protein localises to the cytoplasm. It is found in the cytosol. It carries out the reaction hydrogencarbonate + acetyl-CoA + ATP = malonyl-CoA + ADP + phosphate + H(+). It catalyses the reaction N(6)-biotinyl-L-lysyl-[protein] + hydrogencarbonate + ATP = N(6)-carboxybiotinyl-L-lysyl-[protein] + ADP + phosphate + H(+). It participates in lipid metabolism; malonyl-CoA biosynthesis; malonyl-CoA from acetyl-CoA: step 1/1. Multifunctional enzyme that catalyzes the carboxylation of acetyl-CoA, forming malonyl-CoA, which is used in the plastid for fatty acid synthesis and in the cytosol in various biosynthetic pathways including fatty acid elongation. This Arabidopsis thaliana (Mouse-ear cress) protein is Acetyl-CoA carboxylase 2 (ACC2).